Here is a 554-residue protein sequence, read N- to C-terminus: Arginine--tRNA ligase (554 aa).

The 'HIGH' region signature appears at 132-142 (ANPTGPLHIGH).

This sequence belongs to the class-I aminoacyl-tRNA synthetase family. In terms of assembly, monomer.

The protein localises to the cytoplasm. The enzyme catalyses tRNA(Arg) + L-arginine + ATP = L-arginyl-tRNA(Arg) + AMP + diphosphate. The polypeptide is Arginine--tRNA ligase (Pseudarthrobacter chlorophenolicus (strain ATCC 700700 / DSM 12829 / CIP 107037 / JCM 12360 / KCTC 9906 / NCIMB 13794 / A6) (Arthrobacter chlorophenolicus)).